A 521-amino-acid polypeptide reads, in one-letter code: Bifunctional purine biosynthesis protein PurH (521 aa).

The MGS-like domain maps to 1-145 (MIKQALISVS…KNHRDVTVVV (145 aa)).

Belongs to the PurH family.

It carries out the reaction (6R)-10-formyltetrahydrofolate + 5-amino-1-(5-phospho-beta-D-ribosyl)imidazole-4-carboxamide = 5-formamido-1-(5-phospho-D-ribosyl)imidazole-4-carboxamide + (6S)-5,6,7,8-tetrahydrofolate. It catalyses the reaction IMP + H2O = 5-formamido-1-(5-phospho-D-ribosyl)imidazole-4-carboxamide. The protein operates within purine metabolism; IMP biosynthesis via de novo pathway; 5-formamido-1-(5-phospho-D-ribosyl)imidazole-4-carboxamide from 5-amino-1-(5-phospho-D-ribosyl)imidazole-4-carboxamide (10-formyl THF route): step 1/1. It functions in the pathway purine metabolism; IMP biosynthesis via de novo pathway; IMP from 5-formamido-1-(5-phospho-D-ribosyl)imidazole-4-carboxamide: step 1/1. This Burkholderia orbicola (strain AU 1054) protein is Bifunctional purine biosynthesis protein PurH.